The sequence spans 352 residues: Ion-translocating oxidoreductase complex subunit D (352 aa).

The next 5 membrane-spanning stretches (helical) occupy residues 20–40 (IMLL…WFFG), 42–62 (GTLV…ALVL), 78–109 (ALLT…VIIA), 123–143 (PAMI…TSWL), and 148–168 (IAVN…GHTA). At Thr-187 the chain carries FMN phosphoryl threonine. Helical transmembrane passes span 214 to 234 (ILAG…GVWL), 242 to 262 (WHIP…GWLF), 267 to 287 (LAAP…FFIL), 301 to 321 (LIFG…GGYP), and 322 to 342 (DGVA…DYYT).

It belongs to the NqrB/RnfD family. The complex is composed of six subunits: RsxA, RsxB, RsxC, RsxD, RsxE and RsxG. It depends on FMN as a cofactor.

It is found in the cell inner membrane. Functionally, part of a membrane-bound complex that couples electron transfer with translocation of ions across the membrane. Required to maintain the reduced state of SoxR. The protein is Ion-translocating oxidoreductase complex subunit D of Shigella dysenteriae serotype 1 (strain Sd197).